The following is a 207-amino-acid chain: Uridine kinase (207 aa).

14–21 (GGSGSGKT) contributes to the ATP binding site.

This sequence belongs to the uridine kinase family.

The protein localises to the cytoplasm. It catalyses the reaction uridine + ATP = UMP + ADP + H(+). The catalysed reaction is cytidine + ATP = CMP + ADP + H(+). Its pathway is pyrimidine metabolism; CTP biosynthesis via salvage pathway; CTP from cytidine: step 1/3. It participates in pyrimidine metabolism; UMP biosynthesis via salvage pathway; UMP from uridine: step 1/1. In Deinococcus deserti (strain DSM 17065 / CIP 109153 / LMG 22923 / VCD115), this protein is Uridine kinase.